The following is a 162-amino-acid chain: Cyclic pyranopterin monophosphate synthase (162 aa).

Residues leucine 75–histidine 77 and methionine 113–glutamate 114 each bind substrate. Residue aspartate 128 is part of the active site.

This sequence belongs to the MoaC family. Homohexamer; trimer of dimers.

The enzyme catalyses (8S)-3',8-cyclo-7,8-dihydroguanosine 5'-triphosphate = cyclic pyranopterin phosphate + diphosphate. It functions in the pathway cofactor biosynthesis; molybdopterin biosynthesis. In terms of biological role, catalyzes the conversion of (8S)-3',8-cyclo-7,8-dihydroguanosine 5'-triphosphate to cyclic pyranopterin monophosphate (cPMP). The polypeptide is Cyclic pyranopterin monophosphate synthase (Burkholderia lata (strain ATCC 17760 / DSM 23089 / LMG 22485 / NCIMB 9086 / R18194 / 383)).